Reading from the N-terminus, the 224-residue chain is Large ribosomal subunit protein uL1c (224 aa).

Belongs to the universal ribosomal protein uL1 family. As to quaternary structure, part of the 50S ribosomal subunit.

It localises to the plastid. It is found in the chloroplast. Functionally, binds directly to 23S rRNA. Might be involved in E site tRNA release (Potential). The chain is Large ribosomal subunit protein uL1c (rpl1) from Cyanidioschyzon merolae (strain NIES-3377 / 10D) (Unicellular red alga).